The primary structure comprises 488 residues: UDP-N-acetylmuramate--L-alanine ligase (488 aa).

Residue 122–128 (GTHGKTT) coordinates ATP.

The protein belongs to the MurCDEF family.

It is found in the cytoplasm. The enzyme catalyses UDP-N-acetyl-alpha-D-muramate + L-alanine + ATP = UDP-N-acetyl-alpha-D-muramoyl-L-alanine + ADP + phosphate + H(+). The protein operates within cell wall biogenesis; peptidoglycan biosynthesis. Functionally, cell wall formation. This Mycobacterium ulcerans (strain Agy99) protein is UDP-N-acetylmuramate--L-alanine ligase.